A 382-amino-acid chain; its full sequence is Putative glutamate--cysteine ligase 2-1 (382 aa).

This sequence belongs to the glutamate--cysteine ligase type 2 family. YbdK subfamily.

The enzyme catalyses L-cysteine + L-glutamate + ATP = gamma-L-glutamyl-L-cysteine + ADP + phosphate + H(+). ATP-dependent carboxylate-amine ligase which exhibits weak glutamate--cysteine ligase activity. The sequence is that of Putative glutamate--cysteine ligase 2-1 from Frankia alni (strain DSM 45986 / CECT 9034 / ACN14a).